A 1430-amino-acid chain; its full sequence is Gag-Pol polyprotein (1430 aa).

Gly-2 carries the N-myristoyl glycine; by host lipid modification. Residues 7 to 31 (ILSGGKLDEWEKIQLRPGGKKRYKM) are interaction with Gp41. Residues 8–43 (LSGGKLDEWEKIQLRPGGKKRYKMKHLIWASRELER) form an interaction with host CALM1 region. The segment at 12–19 (KLDEWEKI) is interaction with host AP3D1. Positions 14 to 33 (DEWEKIQLRPGGKKRYKMKH) are interaction with membrane phosphatidylinositol 4,5-bisphosphate and RNA. The Nuclear export signal signature appears at 16–22 (WEKIQLR). Residues 26 to 32 (KKRYKMK) carry the Nuclear localization signal motif. Residues 73 to 77 (EELKS) form an interaction with membrane phosphatidylinositol 4,5-bisphosphate region. Phosphotyrosine; by host is present on Tyr-128. The segment at 185–223 (NTVGGHQAAMQMLKDTINEEAAEWDRLHPVHAGPAPPGQ) is interaction with human PPIA/CYPA and NUP153. Residues 273 to 359 (YSPVSILDIK…GGPSHKARVL (87 aa)) are dimerization/Multimerization of capsid protein p24. CCHC-type zinc fingers lie at residues 384-401 (VKCF…NCRA) and 405-422 (KGCW…DCTE). A disordered region spans residues 438 to 475 (EARKFPSEQTRANSPTSRELRVQRGDNPLSEAGAERRG). Over residues 444–454 (SEQTRANSPTS) the composition is skewed to polar residues. The dimerization of protease stretch occupies residues 483 to 487 (PQITL). The Peptidase A2 domain occupies 502–571 (KEALLDTGAD…TPVNIIGRNM (70 aa)). The active-site For protease activity; shared with dimeric partner is the Asp-507. Dimerization of protease regions lie at residues 531–537 (GIGGFIK) and 570–582 (NMLT…LNFP). One can recognise a Reverse transcriptase domain in the interval 625 to 815 (EGKISKIGPE…PPFLWMGHEL (191 aa)). Asp-691, Asp-766, and Asp-767 together coordinate Mg(2+). The RT 'primer grip' stretch occupies residues 808 to 816 (FLWMGHELH). The Tryptophan repeat motif motif lies at 980–996 (WDTWWTDYWQATWIPEW). The RNase H type-1 domain maps to 1016-1139 (IAGADTFYVD…VDKLVSAGVR (124 aa)). Asp-1025, Glu-1060, Asp-1080, and Asp-1131 together coordinate Mg(2+). The segment at 1145-1186 (DGIDKAQEEHEKYHNNWRAMASDFNLPPIVAKEIVASCDKCQ) adopts an Integrase-type zinc-finger fold. Positions 1154, 1158, 1182, and 1185 each coordinate Zn(2+). The Integrase catalytic domain occupies 1196–1346 (VDCSPGIWQL…SAGERIIDII (151 aa)). Mg(2+) contacts are provided by Asp-1206, Asp-1258, and Glu-1294. The integrase-type DNA-binding region spans 1365 to 1412 (FRVYYRDSRNPVWKGPAKLLWKGEGAVVIQDNSEIKIVPRRKAKIIRD).

As to quaternary structure, homotrimer; further assembles as hexamers of trimers. Interacts with gp41 (via C-terminus). Interacts with host CALM1; this interaction induces a conformational change in the Matrix protein, triggering exposure of the myristate group. Interacts with host AP3D1; this interaction allows the polyprotein trafficking to multivesicular bodies during virus assembly. Part of the pre-integration complex (PIC) which is composed of viral genome, matrix protein, Vpr and integrase. Homodimer; the homodimer further multimerizes as homohexamers or homopentamers. Interacts with human PPIA/CYPA; This interaction stabilizes the capsid. Interacts with human NUP153. Interacts with host PDZD8; this interaction stabilizes the capsid. Interacts with monkey TRIM5; this interaction destabilizes the capsid. In terms of assembly, homodimer, whose active site consists of two apposed aspartic acid residues. As to quaternary structure, heterodimer of p66 RT and p51 RT (RT p66/p51). Heterodimerization of RT is essential for DNA polymerase activity. The overall folding of the subdomains is similar in p66 RT and p51 RT but the spatial arrangements of the subdomains are dramatically different. Homotetramer; may further associate as a homohexadecamer. Part of the pre-integration complex (PIC) which is composed of viral genome, matrix protein, Vpr and integrase. Interacts with human SMARCB1/INI1 and human PSIP1/LEDGF isoform 1. Interacts with human KPNA3; this interaction might play a role in nuclear import of the pre-integration complex. Interacts with human NUP153; this interaction might play a role in nuclear import of the pre-integration complex. It depends on Mg(2+) as a cofactor. Post-translationally, specific enzymatic cleavages by the viral protease yield mature proteins. The protease is released by autocatalytic cleavage. The polyprotein is cleaved during and after budding, this process is termed maturation. Proteolytic cleavage of p66 RT removes the RNase H domain to yield the p51 RT subunit. Nucleocapsid protein p7 might be further cleaved after virus entry. In terms of processing, tyrosine phosphorylated presumably in the virion by a host kinase. Phosphorylation is apparently not a major regulator of membrane association. Phosphorylated possibly by host MAPK1; this phosphorylation is necessary for Pin1-mediated virion uncoating. Post-translationally, methylated by host PRMT6, impairing its function by reducing RNA annealing and the initiation of reverse transcription.

The protein resides in the host cell membrane. It localises to the host endosome. Its subcellular location is the host multivesicular body. The protein localises to the virion membrane. It is found in the host nucleus. The protein resides in the host cytoplasm. It localises to the virion. It catalyses the reaction Specific for a P1 residue that is hydrophobic, and P1' variable, but often Pro.. The catalysed reaction is Endohydrolysis of RNA in RNA/DNA hybrids. Three different cleavage modes: 1. sequence-specific internal cleavage of RNA. Human immunodeficiency virus type 1 and Moloney murine leukemia virus enzymes prefer to cleave the RNA strand one nucleotide away from the RNA-DNA junction. 2. RNA 5'-end directed cleavage 13-19 nucleotides from the RNA end. 3. DNA 3'-end directed cleavage 15-20 nucleotides away from the primer terminus.. The enzyme catalyses 3'-end directed exonucleolytic cleavage of viral RNA-DNA hybrid.. It carries out the reaction DNA(n) + a 2'-deoxyribonucleoside 5'-triphosphate = DNA(n+1) + diphosphate. With respect to regulation, protease: The viral protease is inhibited by many synthetic protease inhibitors (PIs), such as amprenavir, atazanavir, indinavir, loprinavir, nelfinavir, ritonavir and saquinavir. Use of protease inhibitors in tritherapy regimens permit more ambitious therapeutic strategies. Reverse transcriptase/ribonuclease H: RT can be inhibited either by nucleoside RT inhibitors (NRTIs) or by non nucleoside RT inhibitors (NNRTIs). NRTIs act as chain terminators, whereas NNRTIs inhibit DNA polymerization by binding a small hydrophobic pocket near the RT active site and inducing an allosteric change in this region. Classical NRTIs are abacavir, adefovir (PMEA), didanosine (ddI), lamivudine (3TC), stavudine (d4T), tenofovir (PMPA), zalcitabine (ddC), and zidovudine (AZT). Classical NNRTIs are atevirdine (BHAP U-87201E), delavirdine, efavirenz (DMP-266), emivirine (I-EBU), and nevirapine (BI-RG-587). The tritherapies used as a basic effective treatment of AIDS associate two NRTIs and one NNRTI. Mediates, with Gag polyprotein, the essential events in virion assembly, including binding the plasma membrane, making the protein-protein interactions necessary to create spherical particles, recruiting the viral Env proteins, and packaging the genomic RNA via direct interactions with the RNA packaging sequence (Psi). Gag-Pol polyprotein may regulate its own translation, by the binding genomic RNA in the 5'-UTR. At low concentration, the polyprotein would promote translation, whereas at high concentration, the polyprotein would encapsidate genomic RNA and then shut off translation. In terms of biological role, targets the polyprotein to the plasma membrane via a multipartite membrane-binding signal, that includes its myristoylated N-terminus. Matrix protein is part of the pre-integration complex. Implicated in the release from host cell mediated by Vpu. Binds to RNA. Functionally, forms the conical core that encapsulates the genomic RNA-nucleocapsid complex in the virion. Most core are conical, with only 7% tubular. The core is constituted by capsid protein hexamer subunits. The core is disassembled soon after virion entry. Host restriction factors such as TRIM5-alpha or TRIMCyp bind retroviral capsids and cause premature capsid disassembly, leading to blocks in reverse transcription. Capsid restriction by TRIM5 is one of the factors which restricts HIV-1 to the human species. Host PIN1 apparently facilitates the virion uncoating. On the other hand, interactions with PDZD8 or CYPA stabilize the capsid. Its function is as follows. Encapsulates and protects viral dimeric unspliced genomic RNA (gRNA). Binds these RNAs through its zinc fingers. Acts as a nucleic acid chaperone which is involved in rearangement of nucleic acid secondary structure during gRNA retrotranscription. Also facilitates template switch leading to recombination. As part of the polyprotein, participates in gRNA dimerization, packaging, tRNA incorporation and virion assembly. Aspartyl protease that mediates proteolytic cleavages of Gag and Gag-Pol polyproteins during or shortly after the release of the virion from the plasma membrane. Cleavages take place as an ordered, step-wise cascade to yield mature proteins. This process is called maturation. Displays maximal activity during the budding process just prior to particle release from the cell. Also cleaves Nef and Vif, probably concomitantly with viral structural proteins on maturation of virus particles. Hydrolyzes host EIF4GI and PABP1 in order to shut off the capped cellular mRNA translation. The resulting inhibition of cellular protein synthesis serves to ensure maximal viral gene expression and to evade host immune response. Also mediates cleavage of host YTHDF3. Mediates cleavage of host CARD8, thereby activating the CARD8 inflammasome, leading to the clearance of latent HIV-1 in patient CD4(+) T-cells after viral reactivation; in contrast, HIV-1 can evade CARD8-sensing when its protease remains inactive in infected cells prior to viral budding. In terms of biological role, multifunctional enzyme that converts the viral RNA genome into dsDNA in the cytoplasm, shortly after virus entry into the cell. This enzyme displays a DNA polymerase activity that can copy either DNA or RNA templates, and a ribonuclease H (RNase H) activity that cleaves the RNA strand of RNA-DNA heteroduplexes in a partially processive 3' to 5' endonucleasic mode. Conversion of viral genomic RNA into dsDNA requires many steps. A tRNA(3)-Lys binds to the primer-binding site (PBS) situated at the 5'-end of the viral RNA. RT uses the 3' end of the tRNA primer to perform a short round of RNA-dependent minus-strand DNA synthesis. The reading proceeds through the U5 region and ends after the repeated (R) region which is present at both ends of viral RNA. The portion of the RNA-DNA heteroduplex is digested by the RNase H, resulting in a ssDNA product attached to the tRNA primer. This ssDNA/tRNA hybridizes with the identical R region situated at the 3' end of viral RNA. This template exchange, known as minus-strand DNA strong stop transfer, can be either intra- or intermolecular. RT uses the 3' end of this newly synthesized short ssDNA to perform the RNA-dependent minus-strand DNA synthesis of the whole template. RNase H digests the RNA template except for two polypurine tracts (PPTs) situated at the 5'-end and near the center of the genome. It is not clear if both polymerase and RNase H activities are simultaneous. RNase H probably can proceed both in a polymerase-dependent (RNA cut into small fragments by the same RT performing DNA synthesis) and a polymerase-independent mode (cleavage of remaining RNA fragments by free RTs). Secondly, RT performs DNA-directed plus-strand DNA synthesis using the PPTs that have not been removed by RNase H as primers. PPTs and tRNA primers are then removed by RNase H. The 3' and 5' ssDNA PBS regions hybridize to form a circular dsDNA intermediate. Strand displacement synthesis by RT to the PBS and PPT ends produces a blunt ended, linear dsDNA copy of the viral genome that includes long terminal repeats (LTRs) at both ends. Functionally, catalyzes viral DNA integration into the host chromosome, by performing a series of DNA cutting and joining reactions. This enzyme activity takes place after virion entry into a cell and reverse transcription of the RNA genome in dsDNA. The first step in the integration process is 3' processing. This step requires a complex comprising the viral genome, matrix protein, Vpr and integrase. This complex is called the pre-integration complex (PIC). The integrase protein removes 2 nucleotides from each 3' end of the viral DNA, leaving recessed CA OH's at the 3' ends. In the second step, the PIC enters cell nucleus. This process is mediated through integrase and Vpr proteins, and allows the virus to infect a non dividing cell. This ability to enter the nucleus is specific of lentiviruses, other retroviruses cannot and rely on cell division to access cell chromosomes. In the third step, termed strand transfer, the integrase protein joins the previously processed 3' ends to the 5' ends of strands of target cellular DNA at the site of integration. The 5'-ends are produced by integrase-catalyzed staggered cuts, 5 bp apart. A Y-shaped, gapped, recombination intermediate results, with the 5'-ends of the viral DNA strands and the 3' ends of target DNA strands remaining unjoined, flanking a gap of 5 bp. The last step is viral DNA integration into host chromosome. This involves host DNA repair synthesis in which the 5 bp gaps between the unjoined strands are filled in and then ligated. Since this process occurs at both cuts flanking the HIV genome, a 5 bp duplication of host DNA is produced at the ends of HIV-1 integration. Alternatively, Integrase may catalyze the excision of viral DNA just after strand transfer, this is termed disintegration. The protein is Gag-Pol polyprotein (gag-pol) of Homo sapiens (Human).